Consider the following 814-residue polypeptide: Transcription activator of gluconeogenesis PADG_03802 (814 aa).

The interval 1-90 (MTSSARNGSP…SAKDPLRPRR (90 aa)) is disordered. The span at 69-83 (STSSTAASANNASAK) shows a compositional bias: low complexity. A DNA-binding region (zn(2)-C6 fungal-type) is located at residues 97 to 125 (CFACQRAHLTCGDERPCQRCIKRGLQDTC). 6 disordered regions span residues 164–208 (NTNS…TNNY), 236–287 (SAFQ…PTFF), 323–384 (AGDT…SRNI), 442–461 (PPTN…STPS), 598–617 (TGGS…YNSR), and 695–739 (SAAG…ATNV). Residues 171–188 (NGTNSNSDNNSTNTNSNN) show a composition bias toward low complexity. Polar residues-rich tracts occupy residues 189-208 (KPSH…TNNY), 248-279 (FDLS…SQNP), 339-359 (GRSS…NQSP), and 375-384 (GQGQTNSRNI). Residues 442–451 (PPTNTQHQQQ) are compositionally biased toward low complexity. Low complexity predominate over residues 720 to 739 (GTTSAVNGVSNGSGNNATNV).

The protein belongs to the ERT1/acuK family.

The protein resides in the nucleus. Its function is as follows. Transcription factor which regulates nonfermentable carbon utilization. Activator of gluconeogenetic genes. This is Transcription activator of gluconeogenesis PADG_03802 from Paracoccidioides brasiliensis (strain Pb18).